A 155-amino-acid chain; its full sequence is Ribosomal RNA large subunit methyltransferase H (155 aa).

Residues L72, G103, and 122–127 (LSDLTL) each bind S-adenosyl-L-methionine.

Belongs to the RNA methyltransferase RlmH family. Homodimer.

Its subcellular location is the cytoplasm. It carries out the reaction pseudouridine(1915) in 23S rRNA + S-adenosyl-L-methionine = N(3)-methylpseudouridine(1915) in 23S rRNA + S-adenosyl-L-homocysteine + H(+). Specifically methylates the pseudouridine at position 1915 (m3Psi1915) in 23S rRNA. This Acidovorax sp. (strain JS42) protein is Ribosomal RNA large subunit methyltransferase H.